The primary structure comprises 368 residues: MTTLTSTPRQDGYYMPAEWAPHSQTWMVWPQRPDNWRDNAAPAQAAFAAVAKAIARFEPVTVCASAEQYLAARAALDDPRIRVVEMSSDDAWVRDTGPTFVIDDNGGLRGVDWTFNAWGGKDGGLYADWQRDDEVARKILEIEYCDRYRTEGFVLEGGSIHVDGEGTLITTEECLLNRNRNPQLSREQIEAVLREHLAVDSIIWLPHGLFNDETDGHVDNFCCFVRPGEVLLAWTDDANDPNYARCQAAMAVLQRARDAKGRALIVHKIPIPGPLHASDAECAGVVALDGSQLRDPSIRLAGSYVNFLIVNGGIIAPAFGDPLDGEAERILREVFPEHDVVMVPGREILLGGGNIHCITQQQPAPFVR.

Cys357 functions as the Amidino-cysteine intermediate in the catalytic mechanism.

This sequence belongs to the agmatine deiminase family. As to quaternary structure, homodimer.

The enzyme catalyses agmatine + H2O = N-carbamoylputrescine + NH4(+). Its pathway is amine and polyamine biosynthesis; putrescine biosynthesis via agmatine pathway; N-carbamoylputrescine from agmatine: step 1/1. Mediates the hydrolysis of agmatine into N-carbamoylputrescine in the arginine decarboxylase (ADC) pathway of putrescine biosynthesis, a basic polyamine. This is Agmatine deiminase from Stutzerimonas stutzeri (strain A1501) (Pseudomonas stutzeri).